The following is a 335-amino-acid chain: Anthranilate phosphoribosyltransferase (335 aa).

Residues Gly-79, 82-83 (GD), Thr-87, 89-92 (NIST), 107-115 (KHCNQGVSS), and Ser-119 contribute to the 5-phospho-alpha-D-ribose 1-diphosphate site. Residue Gly-79 participates in anthranilate binding. Position 91 (Ser-91) interacts with Mg(2+). Asn-110 serves as a coordination point for anthranilate. Position 165 (Arg-165) interacts with anthranilate. Asp-223 and Glu-224 together coordinate Mg(2+).

This sequence belongs to the anthranilate phosphoribosyltransferase family. In terms of assembly, homodimer. Mg(2+) serves as cofactor.

The catalysed reaction is N-(5-phospho-beta-D-ribosyl)anthranilate + diphosphate = 5-phospho-alpha-D-ribose 1-diphosphate + anthranilate. The protein operates within amino-acid biosynthesis; L-tryptophan biosynthesis; L-tryptophan from chorismate: step 2/5. In terms of biological role, catalyzes the transfer of the phosphoribosyl group of 5-phosphorylribose-1-pyrophosphate (PRPP) to anthranilate to yield N-(5'-phosphoribosyl)-anthranilate (PRA). The polypeptide is Anthranilate phosphoribosyltransferase (Buchnera aphidicola subsp. Diuraphis noxia).